The primary structure comprises 206 residues: Isopentenyl-diphosphate Delta-isomerase (206 aa).

Positions 44 and 51 each coordinate Mn(2+). The Nudix hydrolase domain maps to 49–183 (ALHLAFSCHV…PWAFSPWLVL (135 aa)). Cys86 is an active-site residue. Position 86 (Cys86) interacts with Mg(2+). Residue His88 coordinates Mn(2+). Residue Glu106 coordinates Mg(2+). Residues Glu133 and Glu135 each coordinate Mn(2+). Residue Glu135 is part of the active site.

Belongs to the IPP isomerase type 1 family. Requires Mg(2+) as cofactor. Mn(2+) is required as a cofactor.

It is found in the cytoplasm. The catalysed reaction is isopentenyl diphosphate = dimethylallyl diphosphate. It functions in the pathway isoprenoid biosynthesis; dimethylallyl diphosphate biosynthesis; dimethylallyl diphosphate from isopentenyl diphosphate: step 1/1. Its function is as follows. Catalyzes the 1,3-allylic rearrangement of the homoallylic substrate isopentenyl (IPP) to its highly electrophilic allylic isomer, dimethylallyl diphosphate (DMAPP). The sequence is that of Isopentenyl-diphosphate Delta-isomerase from Agromyces mediolanus (Corynebacterium mediolanum).